Reading from the N-terminus, the 955-residue chain is Alpha-1,4 glucan phosphorylase L isozyme, chloroplastic/amyloplastic (955 aa).

The transit peptide at 1–43 (MSRLSGITPRARDDRSQFQNPRLEIAVPDRTAGLQRTKRTLLV) directs the protein to the chloroplast. Residues 522–550 (KVVTESEKDELEEKDTELEKDEDPVPAPI) are disordered. Acidic residues predominate over residues 528-545 (EKDELEEKDTELEKDEDP). An N6-(pyridoxal phosphate)lysine modification is found at Lys801.

The protein belongs to the glycogen phosphorylase family. Pyridoxal 5'-phosphate serves as cofactor.

Its subcellular location is the plastid. It is found in the chloroplast. The protein resides in the amyloplast. It catalyses the reaction [(1-&gt;4)-alpha-D-glucosyl](n) + phosphate = [(1-&gt;4)-alpha-D-glucosyl](n-1) + alpha-D-glucose 1-phosphate. In terms of biological role, phosphorylase is an important allosteric enzyme in carbohydrate metabolism. Enzymes from different sources differ in their regulatory mechanisms and in their natural substrates. However, all known phosphorylases share catalytic and structural properties. The polypeptide is Alpha-1,4 glucan phosphorylase L isozyme, chloroplastic/amyloplastic (Ipomoea batatas (Sweet potato)).